We begin with the raw amino-acid sequence, 407 residues long: Serine/threonine transporter SstT (407 aa).

The next 9 membrane-spanning stretches (helical) occupy residues 14–34, 48–68, 82–102, 141–161, 192–212, 216–236, 290–310, 316–336, and 363–383; these read GSLV…ATVS, FVGA…AASI, IVIL…LMSF, AVLT…GLAL, IGIF…AIAG, LLLV…PAIV, IPLG…ILTL, MGIQ…GVSA, and VAMQ…SAET.

The protein belongs to the dicarboxylate/amino acid:cation symporter (DAACS) (TC 2.A.23) family.

The protein resides in the cell inner membrane. The enzyme catalyses L-serine(in) + Na(+)(in) = L-serine(out) + Na(+)(out). It carries out the reaction L-threonine(in) + Na(+)(in) = L-threonine(out) + Na(+)(out). Involved in the import of serine and threonine into the cell, with the concomitant import of sodium (symport system). The protein is Serine/threonine transporter SstT of Shewanella halifaxensis (strain HAW-EB4).